Consider the following 322-residue polypeptide: uncharacterized protein (322 aa).

Composition is skewed to basic residues over residues 1-16 (MPGN…KSGT) and 43-61 (LRPH…RRPV). The interval 1–69 (MPGNSRRRGA…PVKRADETET (69 aa)) is disordered. 3 residues coordinate S-adenosyl-L-methionine: glycine 261, isoleucine 281, and leucine 290.

This sequence belongs to the class IV-like SAM-binding methyltransferase superfamily. RNA methyltransferase TrmH family.

This is an uncharacterized protein from Mycobacterium tuberculosis (strain CDC 1551 / Oshkosh).